The following is a 232-amino-acid chain: U-scoloptoxin(11)-Sa3a (232 aa).

Positions 1–21 are cleaved as a signal peptide; that stretch reads MFQFCLLILLLAPGRFFSALG.

This sequence belongs to the scoloptoxin-11 family. Contains 8 disulfide bonds. As to expression, expressed by the venom gland.

The protein resides in the secreted. This is U-scoloptoxin(11)-Sa3a from Scolopendra alternans (Florida Keys giant centipede).